A 352-amino-acid polypeptide reads, in one-letter code: [LysW]-L-2-aminoadipate/[LysW]-L-glutamate phosphate reductase (352 aa).

An NADP(+)-binding site is contributed by 13–16 (SGYT). Residue Cys153 is part of the active site. Asn319 provides a ligand contact to NADP(+).

The protein belongs to the NAGSA dehydrogenase family. Type 1 subfamily. LysY sub-subfamily.

The protein localises to the cytoplasm. The catalysed reaction is [amino-group carrier protein]-C-terminal-N-(1-carboxy-5-oxopentan-1-yl)-L-glutamine + phosphate + NADP(+) = [amino-group carrier protein]-C-terminal-N-(1-carboxy-5-phosphooxy-5-oxopentan-1-yl)-L-glutamine + NADPH + H(+). The enzyme catalyses [amino-group carrier protein]-C-terminal-gamma-(L-glutamyl-5-semialdehyde)-L-glutamate + phosphate + NADP(+) = [amino-group carrier protein]-C-terminal-gamma-(5-phospho-L-glutamyl)-L-glutamate + NADPH + H(+). It functions in the pathway amino-acid biosynthesis; L-lysine biosynthesis via AAA pathway; L-lysine from L-alpha-aminoadipate (Thermus route): step 3/5. It participates in amino-acid biosynthesis; L-arginine biosynthesis. Involved in both the arginine and lysine biosynthetic pathways. In Saccharolobus solfataricus (strain ATCC 35092 / DSM 1617 / JCM 11322 / P2) (Sulfolobus solfataricus), this protein is [LysW]-L-2-aminoadipate/[LysW]-L-glutamate phosphate reductase.